The chain runs to 148 residues: MKVIFTQDVKGKGKKGEVKEVPVGYANNFLLKKNYAVEATPGNLKQLELQKKRAKQERQQEIEDAKALKETLSNIEVEVSAKTGEGGKLFGSVSTKQIAEALKAQHDIKIDKRKMDLPNGIHSLGYTNVPVKLDKEVEGTIRVHTVEQ.

The protein belongs to the bacterial ribosomal protein bL9 family.

Binds to the 23S rRNA. In Staphylococcus aureus (strain Newman), this protein is Large ribosomal subunit protein bL9.